Reading from the N-terminus, the 134-residue chain is Putative pre-16S rRNA nuclease (134 aa).

The protein belongs to the YqgF nuclease family.

It is found in the cytoplasm. Could be a nuclease involved in processing of the 5'-end of pre-16S rRNA. The sequence is that of Putative pre-16S rRNA nuclease from Helicobacter pylori (strain J99 / ATCC 700824) (Campylobacter pylori J99).